Consider the following 230-residue polypeptide: C-reactive protein (230 aa).

The N-terminal stretch at methionine 1–glycine 19 is a signal peptide. The region spanning serine 24–proline 223 is the Pentraxin (PTX) domain. A disulfide bridge links cysteine 55 with cysteine 114. A Ca(2+)-binding site is contributed by asparagine 78. Asparagine 147 is a glycosylation site (N-linked (GlcNAc...) asparagine). Positions 155, 156, 157, and 167 each coordinate Ca(2+). Cysteine 227 and cysteine 228 form a disulfide bridge.

Belongs to the pentraxin family. In terms of assembly, homopentamer; disulfide-linked. Pentraxin (or pentaxin) have a discoid arrangement of 5 non-covalently bound subunits. Two of the five chains form a dimer linked by two interchain disulfide bonds located in the C-terminal heptapeptide and specific to rat CRP. Interacts with FCN1; may regulate monocyte activation by FCN1. Ca(2+) serves as cofactor. The last two cysteines are involved either in interchain disulfide bonds or in an intrachain bond. Found in plasma.

It is found in the secreted. Functionally, displays several functions associated with host defense: it promotes agglutination, bacterial capsular swelling, phagocytosis and complement fixation through its calcium-dependent binding to phosphorylcholine. Can interact with DNA and histones and may scavenge nuclear material released from damaged circulating cells. The chain is C-reactive protein (Crp) from Rattus norvegicus (Rat).